A 402-amino-acid polypeptide reads, in one-letter code: Endoglucanase 1 (402 aa).

Pyrrolidone carboxylic acid is present on Gln-1. Disulfide bonds link Cys-18–Cys-24, Cys-51–Cys-73, and Cys-63–Cys-69. N-linked (GlcNAc...) asparagine glycosylation is present at Asn-89. Intrachain disulfides connect Cys-140-Cys-365, Cys-172-Cys-195, Cys-176-Cys-194, Cys-215-Cys-234, Cys-223-Cys-228, and Cys-239-Cys-315. Catalysis depends on Glu-197, which acts as the Nucleophile. Glu-202 serves as the catalytic Proton donor. Asn-247 is a glycosylation site (N-linked (GlcNAc...) asparagine).

This sequence belongs to the glycosyl hydrolase 7 (cellulase C) family. In terms of assembly, monomer.

The protein localises to the secreted. It carries out the reaction Endohydrolysis of (1-&gt;4)-beta-D-glucosidic linkages in cellulose, lichenin and cereal beta-D-glucans.. Functionally, the biological conversion of cellulose to glucose generally requires three types of hydrolytic enzymes: (1) Endoglucanases which cut internal beta-1,4-glucosidic bonds; (2) Exocellobiohydrolases that cut the disaccharide cellobiose from the non-reducing end of the cellulose polymer chain; (3) Beta-1,4-glucosidases which hydrolyze the cellobiose and other short cello-oligosaccharides to glucose. This chain is Endoglucanase 1 (CEL7B), found in Humicola insolens (Soft-rot fungus).